The chain runs to 130 residues: MMQDPISDMLTRIRNAQAVRKKEVVMPRSKLKMSIANVLKEEGYIVDYREEGDSTKPQLVITLKYHEGESVISEIRRVSSPALQVYKSKDELPKVKNGLGIAIISTSKGVMSDRQARRLGEGGEVLCYVS.

Belongs to the universal ribosomal protein uS8 family. In terms of assembly, part of the 30S ribosomal subunit. Contacts proteins S5 and S12.

In terms of biological role, one of the primary rRNA binding proteins, it binds directly to 16S rRNA central domain where it helps coordinate assembly of the platform of the 30S subunit. The polypeptide is Small ribosomal subunit protein uS8 (Coxiella burnetii (strain Dugway 5J108-111)).